Reading from the N-terminus, the 185-residue chain is Ribosome-recycling factor (185 aa).

This sequence belongs to the RRF family.

Its subcellular location is the cytoplasm. In terms of biological role, responsible for the release of ribosomes from messenger RNA at the termination of protein biosynthesis. May increase the efficiency of translation by recycling ribosomes from one round of translation to another. This chain is Ribosome-recycling factor, found in Salinispora arenicola (strain CNS-205).